The sequence spans 477 residues: Bifunctional protein HldE (477 aa).

Residues 1 to 318 (MKLSMPRFDQ…RAIQREEGSE (318 aa)) are ribokinase. 194-197 (NLSE) is a binding site for ATP. Residue aspartate 263 is part of the active site. Positions 343 to 477 (FTNGCFDILH…EKIRKTDKAE (135 aa)) are cytidylyltransferase.

In the N-terminal section; belongs to the carbohydrate kinase PfkB family. The protein in the C-terminal section; belongs to the cytidylyltransferase family. Homodimer.

The catalysed reaction is D-glycero-beta-D-manno-heptose 7-phosphate + ATP = D-glycero-beta-D-manno-heptose 1,7-bisphosphate + ADP + H(+). It carries out the reaction D-glycero-beta-D-manno-heptose 1-phosphate + ATP + H(+) = ADP-D-glycero-beta-D-manno-heptose + diphosphate. Its pathway is nucleotide-sugar biosynthesis; ADP-L-glycero-beta-D-manno-heptose biosynthesis; ADP-L-glycero-beta-D-manno-heptose from D-glycero-beta-D-manno-heptose 7-phosphate: step 1/4. It functions in the pathway nucleotide-sugar biosynthesis; ADP-L-glycero-beta-D-manno-heptose biosynthesis; ADP-L-glycero-beta-D-manno-heptose from D-glycero-beta-D-manno-heptose 7-phosphate: step 3/4. Its function is as follows. Catalyzes the phosphorylation of D-glycero-D-manno-heptose 7-phosphate at the C-1 position to selectively form D-glycero-beta-D-manno-heptose-1,7-bisphosphate. In terms of biological role, catalyzes the ADP transfer from ATP to D-glycero-beta-D-manno-heptose 1-phosphate, yielding ADP-D-glycero-beta-D-manno-heptose. This Pseudomonas fluorescens (strain ATCC BAA-477 / NRRL B-23932 / Pf-5) protein is Bifunctional protein HldE.